A 393-amino-acid polypeptide reads, in one-letter code: MAFIRVTDLDLAGKRVFIRADMNVPVKDGKVTSDARITASMRTIEHCMRAGAKVMVTSHLGRPTEGEFKEEDSLKPVVDVIAQKLGKNVRLIREWTEGGFDVANGELVVLENCRVNKGEKKNVDETAKKYAALCDVFVMDAFGTAHRAEASTHGIAKFAPTAAAGILLTEELDALAKALANPARPMVAIVGGSKVSTKLTVLEALSEKVDQLVVGGGIANTFLAAMGKNVGKSLCEHDLIPTAKTLIEKMAARGASIPIAVDVVCGKKFDANEPAVLKSADEVADDDMIFDIGPKSAQELADIIAKAGTIVWNGPVGVFEFDQFGEGTKTVSMAIANAPGFSLAGGGDTIAAIQKYDIYDKVSYISTAGGAFLEYLEGKVLPAVAILEERAQG.

Substrate-binding positions include 21–23 (DMN), Arg-36, 59–62 (HLGR), Arg-114, and Arg-147. Residues Lys-198, Glu-320, and 346-349 (GGDT) each bind ATP.

The protein belongs to the phosphoglycerate kinase family. Monomer.

Its subcellular location is the cytoplasm. The enzyme catalyses (2R)-3-phosphoglycerate + ATP = (2R)-3-phospho-glyceroyl phosphate + ADP. The protein operates within carbohydrate degradation; glycolysis; pyruvate from D-glyceraldehyde 3-phosphate: step 2/5. This chain is Phosphoglycerate kinase, found in Thiobacillus denitrificans (strain ATCC 25259 / T1).